We begin with the raw amino-acid sequence, 633 residues long: Threonine--tRNA ligase (633 aa).

The TGS domain occupies 1-61 (MPAIRLPDGS…DHDVDLAIVT (61 aa)). The tract at residues 242 to 533 (DHRKLGRQLD…LIEHHAGAMP (292 aa)) is catalytic. 3 residues coordinate Zn(2+): cysteine 333, histidine 384, and histidine 510.

This sequence belongs to the class-II aminoacyl-tRNA synthetase family. As to quaternary structure, homodimer. It depends on Zn(2+) as a cofactor.

It is found in the cytoplasm. It catalyses the reaction tRNA(Thr) + L-threonine + ATP = L-threonyl-tRNA(Thr) + AMP + diphosphate + H(+). Functionally, catalyzes the attachment of threonine to tRNA(Thr) in a two-step reaction: L-threonine is first activated by ATP to form Thr-AMP and then transferred to the acceptor end of tRNA(Thr). Also edits incorrectly charged L-seryl-tRNA(Thr). This is Threonine--tRNA ligase from Laribacter hongkongensis (strain HLHK9).